Here is a 556-residue protein sequence, read N- to C-terminus: Arginine--tRNA ligase 1 (556 aa).

The 'HIGH' region signature appears at 132-142; it reads ANPTGNLHLGH.

It belongs to the class-I aminoacyl-tRNA synthetase family. As to quaternary structure, monomer.

The protein localises to the cytoplasm. It carries out the reaction tRNA(Arg) + L-arginine + ATP = L-arginyl-tRNA(Arg) + AMP + diphosphate. This chain is Arginine--tRNA ligase 1 (argS1), found in Halalkalibacterium halodurans (strain ATCC BAA-125 / DSM 18197 / FERM 7344 / JCM 9153 / C-125) (Bacillus halodurans).